The sequence spans 394 residues: uncharacterized protein (394 aa).

2 positions are modified to phosphoserine: Ser117 and Ser121. Disordered stretches follow at residues Asp177 to Phe295, Lys315 to Ser347, and Ser370 to Val394. Positions Ser178–Glu190 are enriched in acidic residues. Polar residues-rich tracts occupy residues Ser191–Tyr207 and Glu216–Ile230. Composition is skewed to acidic residues over residues Ser231–Asp263 and Ile284–Phe295. Positions Ser370 to Ser379 are enriched in polar residues. Ser379 is subject to Phosphoserine.

The protein localises to the nucleus. This is an uncharacterized protein from Schizosaccharomyces pombe (strain 972 / ATCC 24843) (Fission yeast).